Consider the following 465-residue polypeptide: Mothers against decapentaplegic homolog 1 (465 aa).

The MH1 domain occupies 12-136 (PAVKRLLGWK…YKRVESPVLP (125 aa)). Residues Cys64, Cys109, Cys121, and His126 each contribute to the Zn(2+) site. The disordered stretch occupies residues 161-240 (QNEPHMPHNA…EDQMTHDTSQ (80 aa)). The segment covering 179–210 (PNSHPFPHSPNSSYPNSPGSSSSTYPHSPASS) has biased composition (low complexity). One can recognise an MH2 domain in the interval 271-465 (WCSIVYYELN…SPHNPISSVS (195 aa)). A phosphoserine mark is found at Ser463 and Ser465.

Belongs to the dwarfin/SMAD family. As to quaternary structure, found in a complex with SMAD4 and YY1. Interacts with HGS, NANOG and ZCCHC12. Upon C-terminus phosphorylation: forms trimers with another SMAD1 and the co-SMAD SMAD4. Interacts with PEBP2-alpha subunit, CREB-binding protein (CBP), p300, SMURF1, SMURF2, USP15 and HOXC8. Associates with ZNF423 or ZNF521 in response to BMP2 leading to activate transcription of BMP target genes. Interacts with SKOR1. Interacts (via MH2 domain) with LEMD3. Binding to LEMD3 results in at least a partial reduction of receptor-mediated phosphorylation. Forms a ternary complex with PSMB4 and OAZ1 before PSMB4 is incorporated into the 20S proteasome. Found in a macromolecular complex with FAM83G. Interacts (via MH2 domain) with FAM83G (via MH2 domain); in a SMAD4-independent manner. Interacts with ZC3H3. Interacts with TMEM119. Interacts (via MH1 and MH2 domains) with ZNF8. Interacts with RANBP3L; the interaction increases when SMAD1 is not phosphorylated and mediates SMAD1 nuclear export. Interacts with EGR1; this interaction inhibits SMAD1 dephosphorylation. Interacts with SMAD6. Interacts with YAP1. Post-translationally, phosphorylation of the C-terminal SVS motif by BMP type 1 receptor kinase activates SMAD1 by promoting dissociation from the receptor and trimerization with SMAD4. Phosphorylation by ERK2 MAP kinase in response to EGF or HGF prevents SMAD1 nuclear accumulation and transcriptional activity in response to BMP. Dephosphorylation, probably by PPM1A, induces its export from the nucleus to the cytoplasm. Dephosphorylation is inhibited by association with EGR1. Phosphorylation by CDK8/9 creates binding sites for YAP1, and subsequent phosphorylation by GSK3 switches off YAP1 binding and adds binding sites for SMURF1. In terms of processing, ubiquitinated by SMAD-specific E3 ubiquitin ligase SMURF1, leading to its degradation. Monoubiquitinated, leading to prevent DNA-binding. Deubiquitination by USP15 alleviates inhibition and promotes activation of TGF-beta target genes. Dephosphorylation, probably by PPM1A, induces its export from the nucleus to the cytoplasm. Phospho-SMAD1 is ubiquitinated by CHIP leading to disruption of the SMAD1-SMAD4 complex.

The protein resides in the cytoplasm. The protein localises to the nucleus. Its function is as follows. Transcriptional modulator that plays a role in various cellular processes, including embryonic development, cell differentiation, and tissue homeostasis. Upon BMP ligand binding to their receptors at the cell surface, is phosphorylated by activated type I BMP receptors (BMPRIs) and associates with SMAD4 to form an heteromeric complex which translocates into the nucleus acting as transcription factor. In turn, the hetero-trimeric complex recognizes cis-regulatory elements containing Smad Binding Elements (SBEs) to modulate the outcome of the signaling network. SMAD1/OAZ1/PSMB4 complex mediates the degradation of the CREBBP/EP300 repressor SNIP1. This chain is Mothers against decapentaplegic homolog 1 (SMAD1), found in Coturnix japonica (Japanese quail).